We begin with the raw amino-acid sequence, 317 residues long: Olfactory receptor 51Q1 (317 aa).

Residues 1–27 (MSQVTNTTQEGIYFILTDIPGFEASHI) lie on the Extracellular side of the membrane. N-linked (GlcNAc...) asparagine glycosylation occurs at N6. Residues 28–48 (WISIPVCCLYTISIMGNTTIL) form a helical membrane-spanning segment. The Cytoplasmic portion of the chain corresponds to 49–56 (TVIRTEPS). Residues 57 to 77 (VHQRMYLFLSMLALTDLGLTL) traverse the membrane as a helical segment. The Extracellular portion of the chain corresponds to 78–101 (TTLPTVMQLLWFNVRRISSEACFA). A disulfide bond links C99 and C191. A helical membrane pass occupies residues 102–122 (QFFFLHGFSFMESSVLLAMSV). The Cytoplasmic portion of the chain corresponds to 123–141 (DCYVAICCPLHYASILTNE). The helical transmembrane segment at 142–162 (VIGRTGLAIICCCVLAVLPSL) threads the bilayer. Residues 163–198 (FLLKRLPFCHSHLLSRSYCLHQDMIRLVCADIRLNS) lie on the Extracellular side of the membrane. The helical transmembrane segment at 199 to 219 (WYGFALALLIIIVDPLLIVIS) threads the bilayer. Residues 220-239 (YTLILKNILGTATWAERLRA) are Cytoplasmic-facing. The chain crosses the membrane as a helical span at residues 240-260 (LNNCLSHILAVLVLYIPMVGV). Topologically, residues 261–275 (SMTHRFAKHASPLVH) are extracellular. Residues 276–296 (VIMANIYLLAPPVMNPIIYSV) traverse the membrane as a helical segment. Residues 297–317 (KNKQIQWGMLNFLSLKNMHSR) lie on the Cytoplasmic side of the membrane.

This sequence belongs to the G-protein coupled receptor 1 family.

It localises to the cell membrane. In terms of biological role, odorant receptor. The protein is Olfactory receptor 51Q1 (OR51Q1) of Homo sapiens (Human).